A 297-amino-acid chain; its full sequence is Glycerol-3-phosphate dehydrogenase [NAD(P)+] (297 aa).

NADPH contacts are provided by Trp11, Arg33, and Lys79. The sn-glycerol 3-phosphate site is built by Lys79, Gly107, and Ser109. Ala111 serves as a coordination point for NADPH. Sn-glycerol 3-phosphate-binding residues include Lys161, Asp214, Ser224, Arg225, and Asn226. Catalysis depends on Lys161, which acts as the Proton acceptor. Arg225 is an NADPH binding site. 2 residues coordinate NADPH: Val249 and Glu251.

It belongs to the NAD-dependent glycerol-3-phosphate dehydrogenase family.

Its subcellular location is the cytoplasm. The enzyme catalyses sn-glycerol 3-phosphate + NAD(+) = dihydroxyacetone phosphate + NADH + H(+). It catalyses the reaction sn-glycerol 3-phosphate + NADP(+) = dihydroxyacetone phosphate + NADPH + H(+). The protein operates within membrane lipid metabolism; glycerophospholipid metabolism. Functionally, catalyzes the reduction of the glycolytic intermediate dihydroxyacetone phosphate (DHAP) to sn-glycerol 3-phosphate (G3P), the key precursor for phospholipid synthesis. In Campylobacter jejuni subsp. jejuni serotype O:6 (strain 81116 / NCTC 11828), this protein is Glycerol-3-phosphate dehydrogenase [NAD(P)+].